A 66-amino-acid chain; its full sequence is Protein translocase subunit SecE (66 aa).

Residues 29 to 49 form a helical membrane-spanning segment; it reads LVASTLVVVVAVFIFSPICLV.

This sequence belongs to the SecE/SEC61-gamma family. As to quaternary structure, component of the Sec protein translocase complex. Heterotrimer consisting of SecY, SecE and SecG subunits. The heterotrimers can form oligomers, although 1 heterotrimer is thought to be able to translocate proteins. Interacts with the ribosome. Interacts with SecDF, and other proteins may be involved. Interacts with SecA.

The protein localises to the cell inner membrane. Functionally, essential subunit of the Sec protein translocation channel SecYEG. Clamps together the 2 halves of SecY. May contact the channel plug during translocation. The chain is Protein translocase subunit SecE from Rickettsia montanensis.